A 568-amino-acid polypeptide reads, in one-letter code: Urease subunit alpha (568 aa).

Residues 130 to 568 enclose the Urease domain; that stretch reads GGIDSHIHFI…LPMAQRYFLF (439 aa). 3 residues coordinate Ni(2+): His135, His137, and Lys218. The residue at position 218 (Lys218) is an N6-carboxylysine. Residue His220 coordinates substrate. Residues His247 and His273 each coordinate Ni(2+). The Proton donor role is filled by His321. Asp361 is a Ni(2+) binding site.

Belongs to the metallo-dependent hydrolases superfamily. Urease alpha subunit family. In terms of assembly, heterotrimer of UreA (gamma), UreB (beta) and UreC (alpha) subunits. Three heterotrimers associate to form the active enzyme. Requires Ni cation as cofactor. Post-translationally, carboxylation allows a single lysine to coordinate two nickel ions.

It localises to the cytoplasm. The enzyme catalyses urea + 2 H2O + H(+) = hydrogencarbonate + 2 NH4(+). It participates in nitrogen metabolism; urea degradation; CO(2) and NH(3) from urea (urease route): step 1/1. The polypeptide is Urease subunit alpha (Nitrosospira multiformis (strain ATCC 25196 / NCIMB 11849 / C 71)).